Consider the following 342-residue polypeptide: Succinylglutamate desuccinylase (342 aa).

Zn(2+) is bound by residues histidine 64, glutamate 67, and histidine 159. Residue glutamate 222 is part of the active site.

The protein belongs to the AspA/AstE family. Succinylglutamate desuccinylase subfamily. The cofactor is Zn(2+).

It catalyses the reaction N-succinyl-L-glutamate + H2O = L-glutamate + succinate. It participates in amino-acid degradation; L-arginine degradation via AST pathway; L-glutamate and succinate from L-arginine: step 5/5. Its function is as follows. Transforms N(2)-succinylglutamate into succinate and glutamate. This chain is Succinylglutamate desuccinylase, found in Burkholderia orbicola (strain MC0-3).